Consider the following 409-residue polypeptide: DEP domain-containing mTOR-interacting protein (409 aa).

Met-1 is modified (N-acetylmethionine). Positions 1-25 (MEEGGSTGSAGSDSSTSGSGGAQQR) are disordered. DEP domains lie at 36-119 (TGEQ…RFRK) and 145-219 (SPEN…QFRM). A DDEX motif motif is present at residues 217–235 (FRMNFRRRRRLMELLNEKS). Position 235 is a phosphoserine; by MAPK3 (Ser-235). The residue at position 241 (Thr-241) is a Phosphothreonine. Phosphoserine occurs at positions 244 and 258. The residue at position 259 (Thr-259) is a Phosphothreonine. Ser-263, Ser-265, Ser-280, Ser-282, and Ser-283 each carry phosphoserine. Residues Ser-286 and Ser-287 each carry the phosphoserine; by CK1 modification. The short motif at 286-291 (SSGYFS) is the BetaTrCP degron motif element. Residue Tyr-289 is modified to Phosphotyrosine; by SYK. Ser-291 carries the phosphoserine; by CK1 modification. A Phosphoserine; by MTOR modification is found at Ser-293. Thr-295 is subject to Phosphothreonine; by MTOR. A phosphoserine mark is found at Ser-297 and Ser-298. Phosphoserine; by MTOR is present on Ser-299. The region spanning 330–407 (TFTIVGDAVG…TIVMEVMEEL (78 aa)) is the PDZ domain.

In terms of assembly, associated component of the mechanistic target of rapamycin complex 1 (mTORC1) which contains MTOR, MLST8 and RPTOR. Associated component of the mechanistic target of rapamycin complex 2 (mTORC2) which contains MTOR, MLST8, PROTOR1, RICTOR, MAPKAP1 and DEPTOR. Interacts (via PDZ domain) with MTOR; interacts with MTOR within both mTORC1 and mTORC2. Interacts (via PDZ domain) with MINAR1 (via N-terminus). Interacts with SIK3. In terms of processing, phosphorylation weakens interaction with MTOR within mTORC1 and mTORC2. Phosphorylated at Ser-286, Ser-287 and Ser-291 in response to mitogenic stimulation by MTOR: DEPTOR is either directly phosphorylated by MTOR or indirectly via proteins kinases that are activated by MTOR, such as CK1/CSNK1A1. Phosphorylation at Ser-286, Ser-287 and Ser-291 promotes ubiquitination by the SCF(BTRC) complex, followed by degradation. Phosphorylation at Ser-235 by MAPK3/ERK1 promotes deubiquitination by USP7, enhancing its stability. Phosphorylation at Tyr-289 by SYK impairs its interaction with MTOR, promoting mTORC1 and mTORC2 signaling. Post-translationally, ubiquitinated; leading to proteasomal degradation. Ubiquitination by the SCF(BTRC) and SCF(FBXW11) complexes following phosphorylation at Ser-286, Ser-287 and Ser-291 by MTOR, leads to its degradation by the proteasome. Deubiquitinated by OTUB1 in response to amino acid via a non-canonical mechanism, leading to DEPTOR stability. Deubiquitinated by USP7 following phosphorylation at Ser-235, promoting its stability.

It localises to the lysosome membrane. With respect to regulation, inhibited upon phosphatidic acid-binding: phosphatidic acid produced upon mitogenic stimulation promotes DEPTOR dissociatiom from the mTORC1 and mTORC2 complexes, leading to their activation. Specifically binds unsaturated phosphatidic acid, such as 16:0-18:1, 18:0-18:1 and di-18:1. Inhibited when nutrients are present via a feedback loop: phosphorylation by MTOR promotes DEPTOR ubiquitination and degradation. In terms of biological role, negative regulator of the mTORC1 and mTORC2 complexes: inhibits the protein kinase activity of MTOR, thereby inactivating both complexes. DEPTOR inhibits mTORC1 and mTORC2 to induce autophagy. In contrast to AKT1S1/PRAS40, only partially inhibits mTORC1 activity. The sequence is that of DEP domain-containing mTOR-interacting protein from Homo sapiens (Human).